Reading from the N-terminus, the 505-residue chain is Alpha-internexin (505 aa).

Residues 1–87 (MSFGSEHYLC…SQAAARTNEY (87 aa)) form a head region. At serine 72 the chain carries Phosphoserine. The coil 1A stretch occupies residues 88–129 (KIIRTNEKEQLQGLNDRFAVFIEKVHQLETQNRALEAELAAL). One can recognise an IF rod domain in the interval 94–407 (EKEQLQGLND…KLLEGEETRF (314 aa)). The tract at residues 130–142 (RQRHAEPSRVGEL) is linker 1. Residues 143-238 (FQRELRELRA…QVHDEEVAEL (96 aa)) form a coil 1B region. A Phosphoserine modification is found at serine 219. The tract at residues 239-262 (LATLQASSQAAAEVDVAVAKPDLT) is linker 2. A coil 2 region spans residues 263-408 (SALREIRAQY…LLEGEETRFS (146 aa)). Lysine 290 bears the N6-acetyllysine mark. Residues serine 335, serine 474, and serine 502 each carry the phosphoserine modification. A tail region spans residues 409-505 (TSGLSISGLN…EITTSSSQKM (97 aa)). Residues 438 to 505 (KVSSAGLSLK…EITTSSSQKM (68 aa)) are disordered. Residues 495 to 505 (EEITTSSSQKM) are compositionally biased toward low complexity.

This sequence belongs to the intermediate filament family. As to quaternary structure, forms homodimers (in vitro). Forms heterodimers with NEFL, NEFM or NEFH (in vitro). In terms of processing, O-glycosylated. In terms of tissue distribution, expressed in the dorsal root ganglion neurons (at protein level).

Functionally, class-IV neuronal intermediate filament that is able to self-assemble. It is involved in the morphogenesis of neurons. It may form an independent structural network without the involvement of other neurofilaments or it may cooperate with NEFL to form the filamentous backbone to which NEFM and NEFH attach to form the cross-bridges. May also cooperate with the neuronal intermediate filament protein PRPH to form filamentous networks. The protein is Alpha-internexin (Ina) of Rattus norvegicus (Rat).